The following is a 1044-amino-acid chain: Isoleucine--tRNA ligase (1044 aa).

Positions 48 to 58 (PFATGLPHFGH) match the 'HIGH' region motif. A 'KMSKS' region motif is present at residues 594-598 (KMSKS). Lys-597 contacts ATP.

This sequence belongs to the class-I aminoacyl-tRNA synthetase family. IleS type 2 subfamily. Monomer. Requires Zn(2+) as cofactor.

The protein localises to the cytoplasm. The catalysed reaction is tRNA(Ile) + L-isoleucine + ATP = L-isoleucyl-tRNA(Ile) + AMP + diphosphate. Catalyzes the attachment of isoleucine to tRNA(Ile). As IleRS can inadvertently accommodate and process structurally similar amino acids such as valine, to avoid such errors it has two additional distinct tRNA(Ile)-dependent editing activities. One activity is designated as 'pretransfer' editing and involves the hydrolysis of activated Val-AMP. The other activity is designated 'posttransfer' editing and involves deacylation of mischarged Val-tRNA(Ile). This Borrelia turicatae (strain 91E135) protein is Isoleucine--tRNA ligase.